Consider the following 237-residue polypeptide: MNIEDIFANNRTRSCEYRRERRTVSLRRAIELCNGEGRRGLIAEYKRRSPSGFSTDEDISSYLSYVKMHRIAGLSILSEPTHFSGSFDDVTLAHRIGVPVLVKDFAPDDHFVESAYNAGGDAVLAILDFLPSEDVERIVRRSADLGMDVIEEYHDRKALKKFVDGDNVILGYNRRDLVSLKTGEDQDMPQYDITILESGINIDNVVHVDMRYSGFLIGTSILKRDGTLEYLEKNRII.

The protein belongs to the TrpC family.

The enzyme catalyses 1-(2-carboxyphenylamino)-1-deoxy-D-ribulose 5-phosphate + H(+) = (1S,2R)-1-C-(indol-3-yl)glycerol 3-phosphate + CO2 + H2O. Its pathway is amino-acid biosynthesis; L-tryptophan biosynthesis; L-tryptophan from chorismate: step 4/5. The protein is Indole-3-glycerol phosphate synthase (trpC) of Thermoplasma acidophilum (strain ATCC 25905 / DSM 1728 / JCM 9062 / NBRC 15155 / AMRC-C165).